Consider the following 193-residue polypeptide: Bifunctional protein PyrR (193 aa).

Residues 57 to 58, Arg98, 119 to 127, Arg152, and Val176 contribute to the substrate site; these read TR and DDVLYSGRS. The PRPP-binding motif lies at 115 to 127; that stretch reads VILVDDVLYSGRS.

It belongs to the purine/pyrimidine phosphoribosyltransferase family. PyrR subfamily.

The catalysed reaction is UMP + diphosphate = 5-phospho-alpha-D-ribose 1-diphosphate + uracil. Its function is as follows. Regulates the transcription of the pyrimidine nucleotide (pyr) operon in response to exogenous pyrimidines. Also displays a weak uracil phosphoribosyltransferase activity which is not physiologically significant. The protein is Bifunctional protein PyrR of Mycobacterium bovis (strain ATCC BAA-935 / AF2122/97).